Here is a 487-residue protein sequence, read N- to C-terminus: Sensor protein CseC (487 aa).

A compositionally biased stretch (low complexity) spans 1-11 (MRGNLRRPGPA). Positions 1–41 (MRGNLRRPGPAGTAGPGRTGIRTSADGGRARPRTGAGTGVR) are disordered. 2 consecutive transmembrane segments (helical) span residues 63 to 83 (ISAAIALVGALVALALSLVVH) and 185 to 205 (ALIIGSIAVVFGGSALGVLIG). Residues 206-262 (GQLSRRLRKAAAAANQVAQGERDVRVRDAIGGVVRDETDDLARAVDAMADALQQRIE) enclose the HAMP domain. Residues 270–472 (DIAHELRTPV…VAVLWLPEHA (203 aa)) enclose the Histidine kinase domain. Histidine 273 carries the post-translational modification Phosphohistidine; by autocatalysis.

The protein resides in the cell membrane. It catalyses the reaction ATP + protein L-histidine = ADP + protein N-phospho-L-histidine.. This chain is Sensor protein CseC (cseC), found in Streptomyces avermitilis (strain ATCC 31267 / DSM 46492 / JCM 5070 / NBRC 14893 / NCIMB 12804 / NRRL 8165 / MA-4680).